The sequence spans 438 residues: Exosome complex component RRP45 (438 aa).

S65 bears the Phosphoserine mark. At K297 the chain carries N6-acetyllysine; alternate. A Glycyl lysine isopeptide (Lys-Gly) (interchain with G-Cter in SUMO1); alternate cross-link involves residue K297. K297 is covalently cross-linked (Glycyl lysine isopeptide (Lys-Gly) (interchain with G-Cter in SUMO2); alternate). Phosphoserine occurs at positions 306 and 346. 2 disordered regions span residues 337 to 365 and 377 to 438; these read AQIG…GGID and TGEV…RTAN. Residues 349-364 are compositionally biased toward acidic residues; the sequence is DLEDSEKEEEEEEGGI. Phosphoserine is present on residues S393 and S395. Over residues 427-438 the composition is skewed to basic residues; that stretch reads QGKRKKKKRTAN.

It belongs to the RNase PH family. Component of the RNA exosome core complex (Exo-9), composed of EXOSC1, EXOSC2, EXOSC3, EXOSC4, EXOSC5, EXOSC6, EXOSC7, EXOSC8 and EXOSC9; within the complex interacts with EXOSC3, EXOSC4, EXOSC5 and DIS3. The catalytically inactive RNA exosome core complex (Exo-9) associates with the catalytic subunit EXOSC10/RRP6. Exo-9 may associate with DIS3 to form the nucleolar exosome complex, or DIS3L to form the cytoplasmic exosome complex. Exo-9 is formed by a hexameric base ring consisting of the heterodimers EXOSC4-EXOSC9, EXOSC5-EXOSC8 and EXOSC6-EXOSC7, and a cap ring consisting of EXOSC1, EXOSC2 and EXOSC3. The RNA exosome complex associates with cofactors C1D/RRP47, MPHOSPH6/MPP6 and MTREX/MTR4. Interacts (via C-terminus region) with SETX (via N-terminus domain); the interaction enhances SETX sumoylation. Interacts with DIS3; the interaction is direct.

Its subcellular location is the cytoplasm. The protein resides in the nucleus. It is found in the nucleolus. It localises to the nucleoplasm. Its function is as follows. Non-catalytic component of the RNA exosome complex which has 3'-&gt;5' exoribonuclease activity and participates in a multitude of cellular RNA processing and degradation events. In the nucleus, the RNA exosome complex is involved in proper maturation of stable RNA species such as rRNA, snRNA and snoRNA, in the elimination of RNA processing by-products and non-coding 'pervasive' transcripts, such as antisense RNA species and promoter-upstream transcripts (PROMPTs), and of mRNAs with processing defects, thereby limiting or excluding their export to the cytoplasm. The RNA exosome may be involved in Ig class switch recombination (CSR) and/or Ig variable region somatic hypermutation (SHM) by targeting AICDA deamination activity to transcribed dsDNA substrates. In the cytoplasm, the RNA exosome complex is involved in general mRNA turnover and specifically degrades inherently unstable mRNAs containing AU-rich elements (AREs) within their 3' untranslated regions, and in RNA surveillance pathways, preventing translation of aberrant mRNAs. It seems to be involved in degradation of histone mRNA. The catalytic inactive RNA exosome core complex of 9 subunits (Exo-9) is proposed to play a pivotal role in the binding and presentation of RNA for ribonucleolysis, and to serve as a scaffold for the association with catalytic subunits and accessory proteins or complexes. EXOSC9 binds to ARE-containing RNAs. The protein is Exosome complex component RRP45 (Exosc9) of Mus musculus (Mouse).